Reading from the N-terminus, the 385-residue chain is MSWQQRVDDALTARRATDTLRRRYVVSQGAGRWLVANGRQYLNFSSNDYLGLSQHPQIIRAWQQAAIRFGVGSGGSGHISGYSVAHQALEEELAQWLGYPRALLFISGFAANQAVITALMKKNDRIVADRLSHASLLEAANLSPAQLRRFIHNDTQHLSRLLQSPCVGQQLVVTEGVYSMDGDSAPLAEIQHIARRHHAWLLVDDAHGIGVTGDEGRGTCWQRGVKPELLVVTFGKGFGVSGAAVLCSESVADYLLQFARHLVYSTSMPPAQAQALSASLAVIRSDEGRERREKLAALVQRFRAGVNASRFTLLNAHSAIQPLIVGDNSRALRLAEALRQQGCWATAIRPPTVPVGTARLRLTLTQAHEACDIDRLLEVLHGAGE.

Arg21 provides a ligand contact to substrate. 108-109 is a pyridoxal 5'-phosphate binding site; it reads GF. His133 is a substrate binding site. Ser179, His207, and Thr233 together coordinate pyridoxal 5'-phosphate. At Lys236 the chain carries N6-(pyridoxal phosphate)lysine. Substrate is bound at residue Thr352.

Belongs to the class-II pyridoxal-phosphate-dependent aminotransferase family. BioF subfamily. In terms of assembly, homodimer. Pyridoxal 5'-phosphate serves as cofactor.

The catalysed reaction is 6-carboxyhexanoyl-[ACP] + L-alanine + H(+) = (8S)-8-amino-7-oxononanoate + holo-[ACP] + CO2. The protein operates within cofactor biosynthesis; biotin biosynthesis. In terms of biological role, catalyzes the decarboxylative condensation of pimeloyl-[acyl-carrier protein] and L-alanine to produce 8-amino-7-oxononanoate (AON), [acyl-carrier protein], and carbon dioxide. The sequence is that of 8-amino-7-oxononanoate synthase from Salmonella paratyphi A (strain ATCC 9150 / SARB42).